The following is a 354-amino-acid chain: S-adenosylmethionine:tRNA ribosyltransferase-isomerase (354 aa).

The protein belongs to the QueA family. In terms of assembly, monomer.

It is found in the cytoplasm. The enzyme catalyses 7-aminomethyl-7-carbaguanosine(34) in tRNA + S-adenosyl-L-methionine = epoxyqueuosine(34) in tRNA + adenine + L-methionine + 2 H(+). It functions in the pathway tRNA modification; tRNA-queuosine biosynthesis. Its function is as follows. Transfers and isomerizes the ribose moiety from AdoMet to the 7-aminomethyl group of 7-deazaguanine (preQ1-tRNA) to give epoxyqueuosine (oQ-tRNA). This Salmonella paratyphi C (strain RKS4594) protein is S-adenosylmethionine:tRNA ribosyltransferase-isomerase.